A 166-amino-acid chain; its full sequence is Small ribosomal subunit protein uS5 (166 aa).

Residues Leu-11–Val-74 enclose the S5 DRBM domain.

It belongs to the universal ribosomal protein uS5 family. As to quaternary structure, part of the 30S ribosomal subunit. Contacts proteins S4 and S8.

With S4 and S12 plays an important role in translational accuracy. Its function is as follows. Located at the back of the 30S subunit body where it stabilizes the conformation of the head with respect to the body. The chain is Small ribosomal subunit protein uS5 from Francisella tularensis subsp. tularensis (strain FSC 198).